We begin with the raw amino-acid sequence, 268 residues long: Unknown seed protein 30.1 (268 aa).

Residues 1–22 (MEFAHLTVLSLFCLAFVGITAT) form the signal peptide. The BURP domain occupies 68–259 (LFFEHDLHPR…GNKAAAWVPN (192 aa)).

This is Unknown seed protein 30.1 from Vicia faba (Broad bean).